A 379-amino-acid polypeptide reads, in one-letter code: Cytochrome-c peroxidase IdrP1 (379 aa).

The first 24 residues, 1–24 (MNNRKPLQLSLLVASLAVAFTASA), serve as a signal peptide directing secretion. Cytochrome c domains are found at residues 50 to 158 (EKIA…DAFK) and 204 to 355 (TSQK…EALS). 6 residues coordinate heme c: C72, C75, H76, C219, C222, and H223.

In terms of assembly, the iodate reductase (Idr) complex is composed of a molybdopterin-dependent iodate reductase (IdrA and IdrB subunits) and two associated peroxidases (IdrP1 and IdrP2). It depends on heme c as a cofactor.

The protein localises to the periplasm. The enzyme catalyses 2 Fe(II)-[cytochrome c] + H2O2 + 2 H(+) = 2 Fe(III)-[cytochrome c] + 2 H2O. Functionally, involved in iodate respiration. Probably reduces the H(2)O(2) produced by IdrA/IdrB to H(2)O, using a reduced cytochrome c as the electron donor. The polypeptide is Cytochrome-c peroxidase IdrP1 (Pseudomonas sp. (strain SCT)).